The sequence spans 101 residues: Chaperone modulatory protein CbpM (101 aa).

It belongs to the CbpM family.

Interacts with CbpA and inhibits both the DnaJ-like co-chaperone activity and the DNA binding activity of CbpA. Together with CbpA, modulates the activity of the DnaK chaperone system. Does not inhibit the co-chaperone activity of DnaJ. The sequence is that of Chaperone modulatory protein CbpM from Pseudomonas entomophila (strain L48).